A 472-amino-acid chain; its full sequence is MSSGTLYDKVWDLHRVAELPGGSTQLFVGLHLIHEVTSPQAFSALKDKGLLVRCPERTVATVDHIVPTTSQQRPFADPLAEEMLSTLERNCQEYGIPLNNIGSGRQGIVHVIAPELGLTQPGMTVACGDSHTSTHGAFGAIAFGIGTSQVRDVLASQSLAMNKLKVRRIQVNGLLPEGVSAKDLILHVIRHLGVKGGVGYAYEFAGSAIEALSMEERMTLCNMAIEGGARCGYVNPDQVTFEYLKGRPHAPEGDAWTRAVAWWSSLATDANATVDDEVVFDAAAIPPTVTWGITPGQGLGIDETVPSLDQLDPGERPIAEEAYRYMDLQPGTAIAGVPVDVCFIGSCTNGRLSDLRAAADVARGRQVAEGIKAFVVPGSEQVAKAAEAEGLDAVFRAAGFEWREPGCSMCLAMNPDRLEGRQISASSSNRNFKGRQGSASGRTLLMSPAMVAAAAVNGRVTDVRTLISPSAS.

[4Fe-4S] cluster-binding residues include C347, C407, and C410.

This sequence belongs to the aconitase/IPM isomerase family. LeuC type 1 subfamily. As to quaternary structure, heterodimer of LeuC and LeuD. [4Fe-4S] cluster serves as cofactor.

It catalyses the reaction (2R,3S)-3-isopropylmalate = (2S)-2-isopropylmalate. It functions in the pathway amino-acid biosynthesis; L-leucine biosynthesis; L-leucine from 3-methyl-2-oxobutanoate: step 2/4. Catalyzes the isomerization between 2-isopropylmalate and 3-isopropylmalate, via the formation of 2-isopropylmaleate. This chain is 3-isopropylmalate dehydratase large subunit, found in Synechococcus sp. (strain CC9605).